Consider the following 251-residue polypeptide: Urease accessory protein UreF (251 aa).

The interval 1-20 is disordered; it reads MAPAPDPAPAGSAAPDPASA. Low complexity predominate over residues 9-20; sequence PAGSAAPDPASA.

The protein belongs to the UreF family. As to quaternary structure, ureD, UreF and UreG form a complex that acts as a GTP-hydrolysis-dependent molecular chaperone, activating the urease apoprotein by helping to assemble the nickel containing metallocenter of UreC. The UreE protein probably delivers the nickel.

It is found in the cytoplasm. Functionally, required for maturation of urease via the functional incorporation of the urease nickel metallocenter. This Paracidovorax citrulli (strain AAC00-1) (Acidovorax citrulli) protein is Urease accessory protein UreF.